Consider the following 187-residue polypeptide: Putative adenylate kinase (187 aa).

ATP contacts are provided by glycine 10, glycine 12, lysine 13, threonine 14, and isoleucine 15. The tract at residues 30-53 (SLSQFVIENKLYTEYDELRQSYII) is NMP. The interval 103–113 (GRGWADIKVAE) is LID. Arginine 104 serves as a coordination point for ATP.

The protein belongs to the adenylate kinase family. AK6 subfamily. As to quaternary structure, interacts with uS11. Not a structural component of 40S pre-ribosomes, but transiently interacts with them by binding to uS11.

It carries out the reaction AMP + ATP = 2 ADP. It catalyses the reaction ATP + H2O = ADP + phosphate + H(+). Its function is as follows. Broad-specificity nucleoside monophosphate (NMP) kinase that catalyzes the reversible transfer of the terminal phosphate group between nucleoside triphosphates and monophosphates. Also has ATPase activity. Involved in the late maturation steps of the 30S ribosomal particles, specifically 16S rRNA maturation. While NMP activity is not required for ribosome maturation, ATPase activity is. Associates transiently with small ribosomal subunit protein uS11. ATP hydrolysis breaks the interaction with uS11. May temporarily remove uS11 from the ribosome to enable a conformational change of the ribosomal RNA that is needed for the final maturation step of the small ribosomal subunit. The protein is Putative adenylate kinase of Saccharolobus islandicus (strain L.S.2.15 / Lassen #1) (Sulfolobus islandicus).